The primary structure comprises 498 residues: N-succinylglutamate 5-semialdehyde dehydrogenase 1 (498 aa).

G231–G236 serves as a coordination point for NAD(+). Residues E254 and C288 contribute to the active site.

Belongs to the aldehyde dehydrogenase family. AstD subfamily.

It catalyses the reaction N-succinyl-L-glutamate 5-semialdehyde + NAD(+) + H2O = N-succinyl-L-glutamate + NADH + 2 H(+). It functions in the pathway amino-acid degradation; L-arginine degradation via AST pathway; L-glutamate and succinate from L-arginine: step 4/5. Its function is as follows. Catalyzes the NAD-dependent reduction of succinylglutamate semialdehyde into succinylglutamate. In Shewanella denitrificans (strain OS217 / ATCC BAA-1090 / DSM 15013), this protein is N-succinylglutamate 5-semialdehyde dehydrogenase 1.